The sequence spans 337 residues: Glyceraldehyde-3-phosphate dehydrogenase 1, cytosolic (337 aa).

NAD(+) is bound by residues 13 to 14 (RI), Asp35, and Arg82. Residues 153-155 (SCT), Thr184, 213-214 (TG), and Arg236 contribute to the D-glyceraldehyde 3-phosphate site. The active-site Nucleophile is Cys154. Asn318 contributes to the NAD(+) binding site.

This sequence belongs to the glyceraldehyde-3-phosphate dehydrogenase family. Homotetramer. In terms of processing, phosphorylated after gibberellin treatment.

It is found in the cytoplasm. The catalysed reaction is D-glyceraldehyde 3-phosphate + phosphate + NAD(+) = (2R)-3-phospho-glyceroyl phosphate + NADH + H(+). Its pathway is carbohydrate degradation; glycolysis; pyruvate from D-glyceraldehyde 3-phosphate: step 1/5. Its function is as follows. Key enzyme in glycolysis that catalyzes the first step of the pathway by converting D-glyceraldehyde 3-phosphate (G3P) into 3-phospho-D-glyceroyl phosphate. Essential for the maintenance of cellular ATP levels and carbohydrate metabolism. This Oryza sativa subsp. japonica (Rice) protein is Glyceraldehyde-3-phosphate dehydrogenase 1, cytosolic (GAPC1).